Reading from the N-terminus, the 306-residue chain is BRCA2 and CDKN1A-interacting protein (306 aa).

Over residues 1 to 10 (MASRPKRRAV) the composition is skewed to basic residues. Residues 1–45 (MASRPKRRAVSRVPPALGDEEEEDEVEEQDEDDSDEEEDEEDEVV) form a disordered region. Acidic residues predominate over residues 18 to 45 (GDEEEEDEVEEQDEDDSDEEEDEEDEVV). 2 positions are modified to phosphoserine: serine 34 and serine 104. The segment at 51–159 (IEFEAYSISD…EKSMVEQLDR (109 aa)) is interaction with BRCA2. Residues 153–251 (MVEQLDRLFN…NAEEEFFYEK (99 aa)) are interaction with CDKN1A. Position 273 is a phosphoserine (serine 273).

This sequence belongs to the BCP1 family. In terms of assembly, interacts with BRCA2, CDKN1A and MTDH/LYRIC. Interacts with DCTN1/p150-glued and ACTR1A/ARP1. Interacts with alpha-, beta- and gamma-tubulins. Interacts with TENT5C; the interaction has no effect on TENT5C poly(A) polymerase function.

The protein localises to the nucleus. It is found in the cytoplasm. It localises to the cytoskeleton. The protein resides in the microtubule organizing center. Its subcellular location is the centrosome. The protein localises to the centriole. It is found in the spindle pole. Functionally, during interphase, required for microtubule organizing and anchoring activities. During mitosis, required for the organization and stabilization of the spindle pole. May promote cell cycle arrest by enhancing the inhibition of CDK2 activity by CDKN1A. May be required for repair of DNA damage by homologous recombination in conjunction with BRCA2. May not be involved in non-homologous end joining (NHEJ). The sequence is that of BRCA2 and CDKN1A-interacting protein (BCCIP) from Bos taurus (Bovine).